The following is a 683-amino-acid chain: U4/U6 small nuclear ribonucleoprotein Prp3 (683 aa).

Positions 1–87 (MALSKRELDE…HSKSSSDRSR (87 aa)) constitute a PWI domain. Over residues 73-107 (GRSSRHSKSSSDRSRKRDLKEVFGDDSEISKESSG) the composition is skewed to basic and acidic residues. The interval 73-135 (GRSSRHSKSS…IPGPPSESPG (63 aa)) is disordered. Residue lysine 139 forms a Glycyl lysine isopeptide (Lys-Gly) (interchain with G-Cter in SUMO2) linkage. Residues 153-183 (IEERKKQLSFISPPTPQPKTPSSSQPERLPI) form a disordered region. Position 164 is a phosphoserine (serine 164). Threonine 167 carries the post-translational modification Phosphothreonine. Glycyl lysine isopeptide (Lys-Gly) (interchain with G-Cter in SUMO2) cross-links involve residues lysine 244 and lysine 252. Residues 416–550 (NLVEHPAQLN…VHISVYRVRN (135 aa)) are mediates interaction with SART3. Serine 619 is modified (phosphoserine).

In terms of assembly, component of the precatalytic spliceosome (spliceosome B complex). Component of the U4/U6-U5 tri-snRNP complex, a building block of the precatalytic spliceosome (spliceosome B complex). The U4/U6-U5 tri-snRNP complex is composed of the U4, U6 and U5 snRNAs and at least PRPF3, PRPF4, PRPF6, PRPF8, PRPF31, SNRNP200, TXNL4A, SNRNP40, SNRPB, SNRPD1, SNRPD2, SNRPD3, SNRPE, SNRPF, SNRPG, DDX23, CD2BP2, PPIH, SNU13, EFTUD2, SART1 and USP39, plus LSM2, LSM3, LSM4, LSM5, LSM6, LSM7 and LSM8. Interacts directly with PRPF4. Part of a heteromeric complex containing PPIH, PRPF3 and PRPF4 that is stable in the absence of RNA. Interacts with SART3; the interaction is direct and recruits the deubiquitinase USP4 to PRPF3. Interacts with PRPF19. Interacts ('Lys-63'-linked polyubiquitinated) with PRPF8 (via the MPN (JAB/Mov34) domain); may stabilize the U4/U6-U5 tri-snRNP complex. Interacts with ERCC6. Ubiquitinated. Undergoes 'Lys-63'-linked polyubiquitination by PRPF19 and deubiquitination by USP4. 'Lys-63'-linked ubiquitination increases the affinity for PRPF8 and may regulate the assembly of the U4/U6-U5 tri-snRNP complex.

Its subcellular location is the nucleus. It localises to the nucleus speckle. Plays a role in pre-mRNA splicing as component of the U4/U6-U5 tri-snRNP complex that is involved in spliceosome assembly, and as component of the precatalytic spliceosome (spliceosome B complex). This is U4/U6 small nuclear ribonucleoprotein Prp3 (PRPF3) from Bos taurus (Bovine).